The following is a 225-amino-acid chain: Testis-expressed protein 30 (225 aa).

This chain is Testis-expressed protein 30 (Tex30), found in Mus musculus (Mouse).